The chain runs to 330 residues: MTEPSRHIPVLGQEAVGLLAPRDGGVYVDATFGAGGYSGLILAAADTRVIGIDRDRTAIAGGFDLVERSGGRLTLVEDRFSNLAEVCAAQGAGLVDGVVMDVGVSSMQLDQSERGFSFRLAGPLDMRMGQSGPSAADVIAVASEAELANIIYIFGEERHSRAVARAIVAARAIEPITTTRALADIVGKVVHAKPGEIHPATRTFQGLRIFVNGELDELHLALSAAERVLKPGGRLVVVSFHSLEDRIVKNFFNARGKTGGGSRHLPELDQEAPSFAILTKRPITAGPDELAGNPRARSAKLRAGERTAALAHPGEDLPAWPTLDAVMGRR.

S-adenosyl-L-methionine is bound by residues 35 to 37, Asp53, Phe80, Asp101, and Gln108; that span reads GGY.

This sequence belongs to the methyltransferase superfamily. RsmH family.

Its subcellular location is the cytoplasm. It catalyses the reaction cytidine(1402) in 16S rRNA + S-adenosyl-L-methionine = N(4)-methylcytidine(1402) in 16S rRNA + S-adenosyl-L-homocysteine + H(+). In terms of biological role, specifically methylates the N4 position of cytidine in position 1402 (C1402) of 16S rRNA. This chain is Ribosomal RNA small subunit methyltransferase H, found in Rhodopseudomonas palustris (strain BisB18).